Here is a 261-residue protein sequence, read N- to C-terminus: Small ribosomal subunit protein uS2 (261 aa).

Ser-2 carries the post-translational modification N-acetylserine. Residues 214–261 form a disordered region; it reads ATEDIKTDDVEEAPAADAETEWTGETEEVDWAESGATPAAEEAAASNW. Positions 222-244 are enriched in acidic residues; it reads DVEEAPAADAETEWTGETEEVDW. Residues 245-261 are compositionally biased toward low complexity; that stretch reads AESGATPAAEEAAASNW.

This sequence belongs to the universal ribosomal protein uS2 family. As to quaternary structure, component of the small ribosomal subunit. Mature ribosomes consist of a small (40S) and a large (60S) subunit. The 40S subunit contains about 33 different proteins and 1 molecule of RNA (18S). The 60S subunit contains about 49 different proteins and 3 molecules of RNA (25S, 5.8S and 5S). Interacts with RPS21.

Its subcellular location is the cytoplasm. Its function is as follows. Required for the assembly and/or stability of the 40S ribosomal subunit. Required for the processing of the 20S rRNA-precursor to mature 18S rRNA in a late step of the maturation of 40S ribosomal subunits. In Debaryomyces hansenii (strain ATCC 36239 / CBS 767 / BCRC 21394 / JCM 1990 / NBRC 0083 / IGC 2968) (Yeast), this protein is Small ribosomal subunit protein uS2.